We begin with the raw amino-acid sequence, 1286 residues long: CLIP-associating protein 2 (1286 aa).

Positions 1–40 (MRRLICKRICDYKSFDDEESVDGNRPSSAASAFKVPAPKT) are golgi localization. Phosphoserine is present on residues Ser-14 and Ser-20. The interval 17 to 70 (DEESVDGNRPSSAASAFKVPAPKTPGNPVNSARKPGSAGGPKAGGTSKEGGAGA) is disordered. Gly residues predominate over residues 53-69 (SAGGPKAGGTSKEGGAG). Positions 66-317 (GGAGAVDEDD…KSLQTYLKSS (252 aa)) are TOG 1. HEAT repeat units follow at residues 179–214 (HGAE…IRHT), 215–251 (HVPR…EWQT), and 256–293 (RHAA…HFPG). Disordered stretches follow at residues 320 to 350 (VASL…TANP) and 355 to 374 (GRVS…LQRS). 3 positions are modified to phosphoserine: Ser-322, Ser-333, and Ser-336. The span at 322–340 (SLPQSDRSSSSSQESLNRP) shows a compositional bias: low complexity. Residues 341–350 (FSSKWSTANP) show a composition bias toward polar residues. 3 positions are modified to phosphoserine: Ser-374, Ser-376, and Ser-413. Positions 410-473 (SYASLEDTSD…GSRSGSPGRV (64 aa)) are disordered. Positions 417–431 (TSDKMDGTASEDGRV) are enriched in basic and acidic residues. Residues 450-565 (RGRSRTKMVS…GPGYGMSQSS (116 aa)) are interaction with microtubules, MAPRE1 and MAPRE3. Low complexity predominate over residues 459–473 (SQSQPGSRSGSPGRV). Residues Ser-461, Ser-465, Ser-469, Ser-484, and Ser-495 each carry the phosphoserine modification. The interval 492-566 (NSASAQKRSK…PGYGMSQSSR (75 aa)) is disordered. The SXIP motif 1; mediates interaction with MAPRE1 and targeting to microtubule plus ends motif lies at 500 to 503 (SKIP). The residue at position 513 (Ser-513) is a Phosphoserine. The short motif at 523–526 (SRIP) is the SXIP motif 2; mediates interaction with MAPRE1 and targeting to microtubule plus ends element. Ser-531, Ser-535, Ser-570, Ser-572, Ser-581, Ser-614, and Ser-620 each carry phosphoserine. Positions 606–616 (RYESYGMHSDD) are enriched in basic and acidic residues. Positions 606-638 (RYESYGMHSDDDANSDASSACSERSYSSRNGSI) are disordered. Residues 620–634 (SDASSACSERSYSSR) are compositionally biased toward low complexity. The interval 642-873 (MRQTEDVAEV…TKLLHNHLRN (232 aa)) is TOG 2. 2 HEAT repeats span residues 702-739 (KVFS…KMGA) and 764-801 (LQFN…QMDP). Thr-779 bears the Phosphothreonine mark. The interaction with RSN and localization to the Golgi and kinetochores stretch occupies residues 864 to 1286 (TKLLHNHLRN…DPTTDVSGQS (423 aa)). 2 disordered regions span residues 870–920 (HLRN…FDYD) and 944–990 (SFRS…QPAL). Polar residues-rich tracts occupy residues 872 to 884 (RNTG…SMGS) and 893 to 914 (SPAN…TLSP). Position 884 is a phosphoserine (Ser-884). Phosphoserine occurs at positions 944, 947, 1005, and 1021. A compositionally biased stretch (basic and acidic residues) spans 947–964 (SQEDMSEPLKRDPKKEDG). The interval 1009 to 1286 (RDYNPYNYSD…DPTTDVSGQS (278 aa)) is required for cortical localization. 3 HEAT repeats span residues 1046-1083 (LDHS…TQEE), 1090-1127 (EHFK…HQPA), and 1208-1245 (LLLP…VIGD).

It belongs to the CLASP family. As to quaternary structure, interacts with microtubules. Interacts with MAPRE1; probably required for targeting to the growing microtubule plus ends. Interacts with CLIP2, ERC1, MAPRE3, PHLDB2 and RSN. The interaction with ERC1 may be mediated by PHLDB2. Interacts with GCC2; recruits CLASP2 to Golgi membranes. Interacts with MACF1. Interacts with SOGA1 and MTCL1. Phosphorylated by GSK3B. Phosphorylation by GSK3B may negatively regulate binding to microtubule lattices in lamella.

Its subcellular location is the cytoplasm. The protein resides in the cytoskeleton. The protein localises to the microtubule organizing center. It localises to the centrosome. It is found in the chromosome. Its subcellular location is the centromere. The protein resides in the kinetochore. The protein localises to the spindle. It localises to the golgi apparatus. It is found in the trans-Golgi network. Its subcellular location is the cell membrane. The protein resides in the cell projection. The protein localises to the ruffle membrane. It localises to the cell cortex. In terms of biological role, microtubule plus-end tracking protein that promotes the stabilization of dynamic microtubules. Involved in the nucleation of noncentrosomal microtubules originating from the trans-Golgi network (TGN). Required for the polarization of the cytoplasmic microtubule arrays in migrating cells towards the leading edge of the cell. May act at the cell cortex to enhance the frequency of rescue of depolymerizing microtubules by attaching their plus-ends to cortical platforms composed of ERC1 and PHLDB2. This cortical microtubule stabilizing activity is regulated at least in part by phosphatidylinositol 3-kinase signaling. Also performs a similar stabilizing function at the kinetochore which is essential for the bipolar alignment of chromosomes on the mitotic spindle. Acts as a mediator of ERBB2-dependent stabilization of microtubules at the cell cortex. In Rattus norvegicus (Rat), this protein is CLIP-associating protein 2 (Clasp2).